The sequence spans 318 residues: Solute carrier family 25 member 34 (318 aa).

Solcar repeat units follow at residues 18–111 (VSPA…ACQA), 115–208 (QQPG…AKAW), and 218–309 (DSWL…LRKL). 6 helical membrane-spanning segments follow: residues 21–41 (AVDL…TNPL), 59–79 (TYPR…RADG), 112–134 (GLTQ…GAFV), 184–205 (VGAA…FTSA), 220–240 (WLAT…VMAP), and 292–315 (LGPH…RAQH).

It belongs to the mitochondrial carrier (TC 2.A.29) family.

It localises to the mitochondrion inner membrane. The enzyme catalyses a dicarboxylate(in) + sulfate(out) = a dicarboxylate(out) + sulfate(in). Putative antiporter that exchanges dicarboxylates and sulfur oxoanions across the inner membrane of mitochondria. The polypeptide is Solute carrier family 25 member 34 (Slc25a34) (Rattus norvegicus (Rat)).